The following is a 336-amino-acid chain: F420-dependent glucose-6-phosphate dehydrogenase (336 aa).

Asp-39 serves as a coordination point for coenzyme F420-(gamma-Glu)n. His-40 serves as the catalytic Proton donor. Coenzyme F420-(gamma-Glu)n is bound by residues Thr-76 and 107–108 (SG). The Proton acceptor role is filled by Glu-109. Residues Asn-112, 177 to 178 (GG), and 180 to 181 (VV) contribute to the coenzyme F420-(gamma-Glu)n site. Residues Thr-195, Lys-198, Lys-259, and Arg-283 each contribute to the substrate site.

This sequence belongs to the F420-dependent glucose-6-phosphate dehydrogenase family. In terms of assembly, homodimer.

It carries out the reaction oxidized coenzyme F420-(gamma-L-Glu)(n) + D-glucose 6-phosphate + H(+) = 6-phospho-D-glucono-1,5-lactone + reduced coenzyme F420-(gamma-L-Glu)(n). Functionally, catalyzes the coenzyme F420-dependent oxidation of glucose 6-phosphate (G6P) to 6-phosphogluconolactone. In Tsukamurella paurometabola (strain ATCC 8368 / DSM 20162 / CCUG 35730 / CIP 100753 / JCM 10117 / KCTC 9821 / NBRC 16120 / NCIMB 702349 / NCTC 13040) (Corynebacterium paurometabolum), this protein is F420-dependent glucose-6-phosphate dehydrogenase.